Reading from the N-terminus, the 198-residue chain is Leucyl/phenylalanyl-tRNA--protein transferase (198 aa).

The protein belongs to the L/F-transferase family.

It is found in the cytoplasm. It catalyses the reaction N-terminal L-lysyl-[protein] + L-leucyl-tRNA(Leu) = N-terminal L-leucyl-L-lysyl-[protein] + tRNA(Leu) + H(+). The enzyme catalyses N-terminal L-arginyl-[protein] + L-leucyl-tRNA(Leu) = N-terminal L-leucyl-L-arginyl-[protein] + tRNA(Leu) + H(+). The catalysed reaction is L-phenylalanyl-tRNA(Phe) + an N-terminal L-alpha-aminoacyl-[protein] = an N-terminal L-phenylalanyl-L-alpha-aminoacyl-[protein] + tRNA(Phe). Functionally, functions in the N-end rule pathway of protein degradation where it conjugates Leu, Phe and, less efficiently, Met from aminoacyl-tRNAs to the N-termini of proteins containing an N-terminal arginine or lysine. This Synechocystis sp. (strain ATCC 27184 / PCC 6803 / Kazusa) protein is Leucyl/phenylalanyl-tRNA--protein transferase.